Here is a 306-residue protein sequence, read N- to C-terminus: Mycothiol acetyltransferase (306 aa).

N-acetyltransferase domains are found at residues 5–157 (EIYE…EPAA) and 159–306 (ITIR…HKKL). Position 36 (Glu36) interacts with 1D-myo-inositol 2-(L-cysteinylamino)-2-deoxy-alpha-D-glucopyranoside. 82 to 84 (MLV) contributes to the acetyl-CoA binding site. 1D-myo-inositol 2-(L-cysteinylamino)-2-deoxy-alpha-D-glucopyranoside contacts are provided by Asp186, Lys227, and Glu238. 242–244 (LGV) contacts acetyl-CoA. Tyr276 provides a ligand contact to 1D-myo-inositol 2-(L-cysteinylamino)-2-deoxy-alpha-D-glucopyranoside. Residue 281–286 (NVRAVR) participates in acetyl-CoA binding.

The protein belongs to the acetyltransferase family. MshD subfamily. Monomer.

It catalyses the reaction 1D-myo-inositol 2-(L-cysteinylamino)-2-deoxy-alpha-D-glucopyranoside + acetyl-CoA = mycothiol + CoA + H(+). Functionally, catalyzes the transfer of acetyl from acetyl-CoA to desacetylmycothiol (Cys-GlcN-Ins) to form mycothiol. The sequence is that of Mycothiol acetyltransferase from Stackebrandtia nassauensis (strain DSM 44728 / CIP 108903 / NRRL B-16338 / NBRC 102104 / LLR-40K-21).